Reading from the N-terminus, the 154-residue chain is NADPH-dependent 7-cyano-7-deazaguanine reductase (154 aa).

Catalysis depends on cysteine 52, which acts as the Thioimide intermediate. Catalysis depends on aspartate 59, which acts as the Proton donor. Residues 74 to 76 (VES) and 93 to 94 (HE) each bind substrate.

This sequence belongs to the GTP cyclohydrolase I family. QueF type 1 subfamily.

It is found in the cytoplasm. It catalyses the reaction 7-aminomethyl-7-carbaguanine + 2 NADP(+) = 7-cyano-7-deazaguanine + 2 NADPH + 3 H(+). The protein operates within tRNA modification; tRNA-queuosine biosynthesis. Functionally, catalyzes the NADPH-dependent reduction of 7-cyano-7-deazaguanine (preQ0) to 7-aminomethyl-7-deazaguanine (preQ1). This chain is NADPH-dependent 7-cyano-7-deazaguanine reductase, found in Rhizobium rhizogenes (strain K84 / ATCC BAA-868) (Agrobacterium radiobacter).